Here is a 350-residue protein sequence, read N- to C-terminus: C-X-C chemokine receptor type 1 (350 aa).

The Extracellular portion of the chain corresponds to methionine 1 to lysine 39. Asparagine 3 and asparagine 16 each carry an N-linked (GlcNAc...) asparagine glycan. The helical transmembrane segment at tyrosine 40–tyrosine 66 threads the bilayer. The Cytoplasmic portion of the chain corresponds to serine 67–aspartate 75. The helical transmembrane segment at valine 76–alanine 96 threads the bilayer. Residues alanine 97–lysine 111 lie on the Extracellular side of the membrane. A disulfide bond links cysteine 110 and cysteine 187. The chain crosses the membrane as a helical span at residues valine 112 to valine 133. Residues aspartate 134–lysine 154 are Cytoplasmic-facing. Residues phenylalanine 155–phenylalanine 174 form a helical membrane-spanning segment. The Extracellular segment spans residues arginine 175–arginine 199. The chain crosses the membrane as a helical span at residues methionine 200–phenylalanine 220. Topologically, residues cysteine 221–arginine 242 are cytoplasmic. A helical membrane pass occupies residues valine 243–alanine 264. Topologically, residues aspartate 265–arginine 285 are extracellular. Residues alanine 286–isoleucine 308 form a helical membrane-spanning segment. The Cytoplasmic segment spans residues glycine 309–leucine 350.

The protein belongs to the G-protein coupled receptor 1 family. Interacts with IL8. Interacts with GNAI2.

It is found in the cell membrane. Functionally, receptor to interleukin-8, which is a powerful neutrophils chemotactic factor. Binding of IL-8 to the receptor causes activation of neutrophils. This response is mediated via a G-protein that activates a phosphatidylinositol-calcium second messenger system. This chain is C-X-C chemokine receptor type 1 (CXCR1), found in Homo sapiens (Human).